Reading from the N-terminus, the 612-residue chain is MPKLRSATSTQGRNMAGARALWRATGMKENDFGKPIIAVVNSFTQFVPGHVHLKDMGQLVAAEIEKAGGVAKEFNTIAVDDGIAMGHGGMLYSLPSRDLIADSVEYMVNAHCADAMVCISNCDKITPGMLMAAMRLNIPTIFVSGGPMEAGKTKLSDQLIRLDLVDAMIEAADPNVSDERIDAIERSACPTCGSCSGMFTANSMNCLTEALGLSLPGNGSMLATHADRKELFLKAGRQIVELCKRYYEQDDVSVLPRSIGTFKAFENAMSLDIAMGGSSNTVLHLLAAAQEAGVDFKMEDIDRLSRKVPCLSKIAPNTNKYHMEDVHRAGGIMGLLGELDRAGLIHKNTHTVLGMSMGEQLDQYDIIRNQDEELHKFFRAGPAGIRTTQAFSQDCRWDSVDNDRVNGCIRNKENAISQEGGLAVLFGNLAEDGCIVKTAGVDESIWKFTGTAIVFESQEDAVAGILGGKVKEGHVVVIRYEGPKGGPGMQEMLYPTSYLKSMGLGKKCALLTDGRFSGGTSGLSIGHASPEAASGGAIGLVRDGDIINIDIPNRAINLEISNEELAARRSGQDQKGWQPAHREREVSFALKVFGHFATSADKGAVRDKTLLK.

Asp81 provides a ligand contact to Mg(2+). Cys122 lines the [2Fe-2S] cluster pocket. The Mg(2+) site is built by Asp123 and Lys124. Lys124 is modified (N6-carboxylysine). Cys195 contacts [2Fe-2S] cluster. Glu491 contacts Mg(2+). Residue Ser517 is the Proton acceptor of the active site.

The protein belongs to the IlvD/Edd family. Homodimer. [2Fe-2S] cluster serves as cofactor. Requires Mg(2+) as cofactor.

It catalyses the reaction (2R)-2,3-dihydroxy-3-methylbutanoate = 3-methyl-2-oxobutanoate + H2O. The catalysed reaction is (2R,3R)-2,3-dihydroxy-3-methylpentanoate = (S)-3-methyl-2-oxopentanoate + H2O. It participates in amino-acid biosynthesis; L-isoleucine biosynthesis; L-isoleucine from 2-oxobutanoate: step 3/4. The protein operates within amino-acid biosynthesis; L-valine biosynthesis; L-valine from pyruvate: step 3/4. In terms of biological role, functions in the biosynthesis of branched-chain amino acids. Catalyzes the dehydration of (2R,3R)-2,3-dihydroxy-3-methylpentanoate (2,3-dihydroxy-3-methylvalerate) into 2-oxo-3-methylpentanoate (2-oxo-3-methylvalerate) and of (2R)-2,3-dihydroxy-3-methylbutanoate (2,3-dihydroxyisovalerate) into 2-oxo-3-methylbutanoate (2-oxoisovalerate), the penultimate precursor to L-isoleucine and L-valine, respectively. In Haemophilus influenzae (strain PittEE), this protein is Dihydroxy-acid dehydratase.